We begin with the raw amino-acid sequence, 177 residues long: Interleukin-1 receptor antagonist protein (177 aa).

A signal peptide spans 1-25 (MEICRGLRSHLITLLLFLFHSETIC). C91 and C141 form a disulfide bridge. N109 carries an N-linked (GlcNAc...) asparagine glycan.

Belongs to the IL-1 family. The intracellular form of IL1RN is predominantly expressed in epithelial cells.

It is found in the secreted. The protein localises to the cytoplasm. Functionally, anti-inflammatory antagonist of interleukin-1 family of proinflammatory cytokines such as interleukin-1beta/IL1B and interleukin-1alpha/IL1A. Protects from immune dysregulation and uncontrolled systemic inflammation triggered by IL1 for a range of innate stimulatory agents such as pathogens. The protein is Interleukin-1 receptor antagonist protein (IL1RN) of Homo sapiens (Human).